A 270-amino-acid chain; its full sequence is Cross-pathway control protein 1 (270 aa).

Disordered stretches follow at residues 114-135 (QAQA…QTQP) and 153-213 (QTVH…IIVE). Residues 184–195 (SVSPPSGRHSSV) are compositionally biased toward low complexity. One can recognise a bZIP domain in the interval 216–270 (SDVVAMKRARNTLAARKSRERKAQRLEELEAKIEELIAERDRWKNLALAHGASTE). Residues 222 to 240 (KRARNTLAARKSRERKAQR) are basic motif. The interval 241 to 248 (LEELEAKI) is leucine-zipper.

Belongs to the bZIP family. GCN4 subfamily. Binds DNA as a dimer.

It localises to the nucleus. Its function is as follows. In N.crassa grown under amino acid starvation conditions, this protein is required for increasing the transcription of the genes coding for many amino acid biosynthetic pathways enzymes. This transcription factor binds and recognize the DNA sequence: 5'-TGACTC-3'. This chain is Cross-pathway control protein 1 (cpc-1), found in Neurospora crassa (strain ATCC 24698 / 74-OR23-1A / CBS 708.71 / DSM 1257 / FGSC 987).